A 211-amino-acid polypeptide reads, in one-letter code: ATP phosphoribosyltransferase (211 aa).

It belongs to the ATP phosphoribosyltransferase family. Short subfamily. In terms of assembly, heteromultimer composed of HisG and HisZ subunits.

Its subcellular location is the cytoplasm. It catalyses the reaction 1-(5-phospho-beta-D-ribosyl)-ATP + diphosphate = 5-phospho-alpha-D-ribose 1-diphosphate + ATP. The protein operates within amino-acid biosynthesis; L-histidine biosynthesis; L-histidine from 5-phospho-alpha-D-ribose 1-diphosphate: step 1/9. In terms of biological role, catalyzes the condensation of ATP and 5-phosphoribose 1-diphosphate to form N'-(5'-phosphoribosyl)-ATP (PR-ATP). Has a crucial role in the pathway because the rate of histidine biosynthesis seems to be controlled primarily by regulation of HisG enzymatic activity. The protein is ATP phosphoribosyltransferase of Pseudomonas fluorescens (strain ATCC BAA-477 / NRRL B-23932 / Pf-5).